The chain runs to 299 residues: Very long chain fatty acid elongase 5 (299 aa).

N-acetylmethionine is present on Met-1. 6 consecutive transmembrane segments (helical) span residues 26–46 (WFLL…LLIV), 64–84 (ILVV…CELV), 112–132 (VLRW…FFIL), 150–170 (MLNI…YFGA), 205–225 (GQLL…IWPC), and 226–246 (TFPL…IALF). Residues 275–299 (AAVNGHTNSFSPLENNVKPRKLRKD) are disordered. The span at 279-288 (GHTNSFSPLE) shows a compositional bias: polar residues. Ser-285 carries the phosphoserine modification.

Belongs to the ELO family. ELOVL5 subfamily. In terms of assembly, interacts with TECR.

Its subcellular location is the endoplasmic reticulum membrane. It localises to the cell projection. The protein localises to the dendrite. It carries out the reaction a very-long-chain acyl-CoA + malonyl-CoA + H(+) = a very-long-chain 3-oxoacyl-CoA + CO2 + CoA. It catalyses the reaction (6Z,9Z,12Z)-octadecatrienoyl-CoA + malonyl-CoA + H(+) = (8Z,11Z,14Z)-3-oxoeicosatrienoyl-CoA + CO2 + CoA. The catalysed reaction is (9Z,12Z,15Z)-octadecatrienoyl-CoA + malonyl-CoA + H(+) = (11Z,14Z,17Z)-3-oxoeicosatrienoyl-CoA + CO2 + CoA. The enzyme catalyses (9Z)-hexadecenoyl-CoA + malonyl-CoA + H(+) = 3-oxo-(11Z)-octadecenoyl-CoA + CO2 + CoA. It carries out the reaction (9Z)-octadecenoyl-CoA + malonyl-CoA + H(+) = 3-oxo-(11Z)-eicosenoyl-CoA + CO2 + CoA. It catalyses the reaction (11Z)-octadecenoyl-CoA + malonyl-CoA + H(+) = 3-oxo-(13Z)-eicosenoyl-CoA + CO2 + CoA. The catalysed reaction is (9Z,12Z)-octadecadienoyl-CoA + malonyl-CoA + H(+) = (11Z,14Z)-3-oxoicosa-11,14-dienoyl-CoA + CO2 + CoA. The enzyme catalyses (6Z,9Z,12Z,15Z)-octadecatetraenoyl-CoA + malonyl-CoA + H(+) = (8Z,11Z,14Z,17Z)-3-oxoicosatetraenoyl-CoA + CO2 + CoA. It carries out the reaction (5Z,8Z,11Z,14Z)-eicosatetraenoyl-CoA + malonyl-CoA + H(+) = (7Z,10Z,13Z,16Z)-3-oxodocosatetraenoyl-CoA + CO2 + CoA. It catalyses the reaction (5Z,8Z,11Z,14Z,17Z)-eicosapentaenoyl-CoA + malonyl-CoA + H(+) = 3-oxo-(7Z,10Z,13Z,16Z,19Z)-docosapentaenoyl-CoA + CO2 + CoA. It functions in the pathway lipid metabolism; polyunsaturated fatty acid biosynthesis. Functionally, catalyzes the first and rate-limiting reaction of the four reactions that constitute the long-chain fatty acids elongation cycle. This endoplasmic reticulum-bound enzymatic process allows the addition of 2 carbons to the chain of long- and very long-chain fatty acids (VLCFAs) per cycle. Condensing enzyme that acts specifically toward polyunsaturated acyl-CoA with the higher activity toward C18:3(n-6) acyl-CoA. May participate in the production of monounsaturated and of polyunsaturated VLCFAs of different chain lengths that are involved in multiple biological processes as precursors of membrane lipids and lipid mediators. In conditions where the essential linoleic and alpha linoleic fatty acids are lacking it is also involved in the synthesis of Mead acid from oleic acid. This chain is Very long chain fatty acid elongase 5, found in Macaca fascicularis (Crab-eating macaque).